The sequence spans 422 residues: Probable isoprenylcysteine alpha-carbonyl methylesterase ICMEL2 (422 aa).

Positions 1 to 16 (MQLSPERCRPMSENRE) are enriched in basic and acidic residues. A disordered region spans residues 1 to 55 (MQLSPERCRPMSENREAWSANSEEMELLHGSNRLSSPEHVRRRVSGNSSEDGSPR). The next 2 membrane-spanning stretches (helical) occupy residues 97–117 (LLALACYAMLLMPGFLQVAYL) and 152–172 (VVVFVTGGAWIIGYKAWGSLL). Substrate-binding positions include 158–160 (GGA) and 229–231 (QSA). Residues Ser230, Asp331, and His363 contribute to the active site.

This sequence belongs to the AB hydrolase superfamily. Isoprenylcysteine methylesterase family. As to expression, expressed at low levels in flowers and siliques.

It localises to the endoplasmic reticulum membrane. Its subcellular location is the golgi apparatus membrane. The enzyme catalyses [protein]-C-terminal S-[(2E,6E)-farnesyl]-L-cysteine methyl ester + H2O = [protein]-C-terminal S-[(2E,6E)-farnesyl]-L-cysteine + methanol + H(+). Its function is as follows. Catalyzes the demethylation of isoprenylcysteine methylesters. May act as a negative regulator of ABA signaling. The polypeptide is Probable isoprenylcysteine alpha-carbonyl methylesterase ICMEL2 (Arabidopsis thaliana (Mouse-ear cress)).